Consider the following 520-residue polypeptide: Transactivator/viroplasmin protein (520 aa).

The disordered stretch occupies residues 487-520; sequence QDASADSGPKDGPPPTRSIVEKEDVPTTSSKQVD.

Belongs to the caulimoviridae viroplasmin family.

It is found in the host cytoplasm. In terms of biological role, enhances the ribosomal termination-reinitiation event leading to the translation of major open reading frames on the polycistronic viral RNAs. This Cauliflower mosaic virus (strain CM-1841) (CaMV) protein is Transactivator/viroplasmin protein.